The following is a 282-amino-acid chain: 3-oxoadipate CoA-transferase subunit A (282 aa).

It belongs to the 3-oxoacid CoA-transferase subunit A family. As to quaternary structure, heterotetramer composed of 2 A and 2 B subunits.

The catalysed reaction is 3-oxoadipate + succinyl-CoA = 3-oxoadipyl-CoA + succinate. It functions in the pathway aromatic compound metabolism; beta-ketoadipate pathway; acetyl-CoA and succinyl-CoA from 3-oxoadipate: step 1/2. Its function is as follows. Catalyzes the CoA transfer from succinate to 3-oxoadipate (beta-ketoadipate). The sequence is that of 3-oxoadipate CoA-transferase subunit A (catI) from Pseudomonas knackmussii (strain DSM 6978 / CCUG 54928 / LMG 23759 / B13).